The chain runs to 60 residues: Putative potassium channel blocker TXKS1 (60 aa).

Positions 1–28 (MNRLTTIILMLIVINVIMDDISESKVAA) are cleaved as a signal peptide. Cystine bridges form between Cys-32-Cys-49, Cys-35-Cys-55, and Cys-39-Cys-57. Lysine amide is present on Lys-59.

In terms of tissue distribution, expressed by the venom gland.

It is found in the secreted. Inhibits potassium channels. The protein is Putative potassium channel blocker TXKS1 of Olivierus martensii (Manchurian scorpion).